Consider the following 489-residue polypeptide: Betaine aldehyde dehydrogenase (489 aa).

K(+) is bound by residues Thr-26 and Asp-93. An NAD(+)-binding site is contributed by 150–152; sequence GAW. The Charge relay system role is filled by Lys-162. 176–179 provides a ligand contact to NAD(+); it reads KPSE. Val-180 contacts K(+). 229-232 lines the NAD(+) pocket; the sequence is GVET. Position 245 (Leu-245) interacts with K(+). Catalysis depends on Glu-251, which acts as the Proton acceptor. The NAD(+) site is built by Gly-253, Cys-285, and Glu-386. Cys-285 (nucleophile) is an active-site residue. Cys-285 is subject to Cysteine sulfenic acid (-SOH). Residues Lys-456 and Gly-459 each coordinate K(+). Glu-463 serves as the catalytic Charge relay system.

Belongs to the aldehyde dehydrogenase family. In terms of assembly, dimer of dimers. It depends on K(+) as a cofactor.

The catalysed reaction is betaine aldehyde + NAD(+) + H2O = glycine betaine + NADH + 2 H(+). It functions in the pathway amine and polyamine biosynthesis; betaine biosynthesis via choline pathway; betaine from betaine aldehyde: step 1/1. Functionally, involved in the biosynthesis of the osmoprotectant glycine betaine. Catalyzes the irreversible oxidation of betaine aldehyde to the corresponding acid. This Burkholderia pseudomallei (strain 1106a) protein is Betaine aldehyde dehydrogenase.